The chain runs to 507 residues: Histidine ammonia-lyase (507 aa).

Positions 141-143 form a cross-link, 5-imidazolinone (Ala-Gly); sequence ASG. 2,3-didehydroalanine (Ser) is present on serine 142.

Belongs to the PAL/histidase family. In terms of processing, contains an active site 4-methylidene-imidazol-5-one (MIO), which is formed autocatalytically by cyclization and dehydration of residues Ala-Ser-Gly.

The protein localises to the cytoplasm. It catalyses the reaction L-histidine = trans-urocanate + NH4(+). It functions in the pathway amino-acid degradation; L-histidine degradation into L-glutamate; N-formimidoyl-L-glutamate from L-histidine: step 1/3. This is Histidine ammonia-lyase from Burkholderia cenocepacia (strain ATCC BAA-245 / DSM 16553 / LMG 16656 / NCTC 13227 / J2315 / CF5610) (Burkholderia cepacia (strain J2315)).